We begin with the raw amino-acid sequence, 415 residues long: Serine hydroxymethyltransferase (415 aa).

(6S)-5,6,7,8-tetrahydrofolate-binding positions include leucine 117 and 121–123 (GHL). Residue lysine 226 is modified to N6-(pyridoxal phosphate)lysine.

The protein belongs to the SHMT family. In terms of assembly, homodimer. Pyridoxal 5'-phosphate serves as cofactor.

The protein localises to the cytoplasm. It catalyses the reaction (6R)-5,10-methylene-5,6,7,8-tetrahydrofolate + glycine + H2O = (6S)-5,6,7,8-tetrahydrofolate + L-serine. Its pathway is one-carbon metabolism; tetrahydrofolate interconversion. The protein operates within amino-acid biosynthesis; glycine biosynthesis; glycine from L-serine: step 1/1. Functionally, catalyzes the reversible interconversion of serine and glycine with tetrahydrofolate (THF) serving as the one-carbon carrier. This reaction serves as the major source of one-carbon groups required for the biosynthesis of purines, thymidylate, methionine, and other important biomolecules. Also exhibits THF-independent aldolase activity toward beta-hydroxyamino acids, producing glycine and aldehydes, via a retro-aldol mechanism. This Leptospira interrogans serogroup Icterohaemorrhagiae serovar copenhageni (strain Fiocruz L1-130) protein is Serine hydroxymethyltransferase.